The primary structure comprises 443 residues: Tol-Pal system protein TolB (443 aa).

An N-terminal signal peptide occupies residues 1-24 (MSFQIRVFTAILAVLSLFTAPVLA). The interval 424 to 443 (LRPVRTPEGGSDPSWSPLQR) is disordered.

This sequence belongs to the TolB family. In terms of assembly, the Tol-Pal system is composed of five core proteins: the inner membrane proteins TolA, TolQ and TolR, the periplasmic protein TolB and the outer membrane protein Pal. They form a network linking the inner and outer membranes and the peptidoglycan layer.

The protein resides in the periplasm. Part of the Tol-Pal system, which plays a role in outer membrane invagination during cell division and is important for maintaining outer membrane integrity. This Roseobacter denitrificans (strain ATCC 33942 / OCh 114) (Erythrobacter sp. (strain OCh 114)) protein is Tol-Pal system protein TolB.